Here is a 183-residue protein sequence, read N- to C-terminus: Large ribosomal subunit protein uL6 (183 aa).

This sequence belongs to the universal ribosomal protein uL6 family. Part of the 50S ribosomal subunit.

In terms of biological role, this protein binds to the 23S rRNA, and is important in its secondary structure. It is located near the subunit interface in the base of the L7/L12 stalk, and near the tRNA binding site of the peptidyltransferase center. This Porphyromonas gingivalis (strain ATCC 33277 / DSM 20709 / CIP 103683 / JCM 12257 / NCTC 11834 / 2561) protein is Large ribosomal subunit protein uL6.